Here is a 127-residue protein sequence, read N- to C-terminus: Phosphoribosyl-ATP pyrophosphatase (127 aa).

The protein belongs to the PRA-PH family.

The protein localises to the cytoplasm. It catalyses the reaction 1-(5-phospho-beta-D-ribosyl)-ATP + H2O = 1-(5-phospho-beta-D-ribosyl)-5'-AMP + diphosphate + H(+). It functions in the pathway amino-acid biosynthesis; L-histidine biosynthesis; L-histidine from 5-phospho-alpha-D-ribose 1-diphosphate: step 2/9. The sequence is that of Phosphoribosyl-ATP pyrophosphatase from Polaromonas sp. (strain JS666 / ATCC BAA-500).